We begin with the raw amino-acid sequence, 529 residues long: Extracellular signal-regulated kinase 1 (529 aa).

2 disordered regions span residues 1-20 and 100-131; these read MEPE…THQS and QQNQ…SNFN. Polar residues predominate over residues 8–20; it reads FQSQMDSDNTHQS. Positions 100–117 are enriched in low complexity; that stretch reads QQNQQQQSQQMTQQQLQQ. Residues 149–439 form the Protein kinase domain; the sequence is YSIVKCIGHG…EALAHPYFQS (291 aa). ATP-binding positions include 155 to 163 and lysine 178; that span reads IGHGAYGVV. The active-site Proton acceptor is aspartate 275. The residue at position 309 (threonine 309) is a Phosphothreonine. The short motif at 309-311 is the TXY element; it reads TEY. Tyrosine 311 is modified (phosphotyrosine).

This sequence belongs to the protein kinase superfamily. CMGC Ser/Thr protein kinase family. MAP kinase subfamily. Mg(2+) serves as cofactor. Post-translationally, dually phosphorylated on Thr-309 and Tyr-311, which activates the enzyme.

The catalysed reaction is L-seryl-[protein] + ATP = O-phospho-L-seryl-[protein] + ADP + H(+). It catalyses the reaction L-threonyl-[protein] + ATP = O-phospho-L-threonyl-[protein] + ADP + H(+). Its activity is regulated as follows. Activated by tyrosine and threonine phosphorylation. Its function is as follows. Kinase involved in a signal transduction pathway. This Dictyostelium discoideum (Social amoeba) protein is Extracellular signal-regulated kinase 1 (erkA).